The primary structure comprises 1597 residues: Pentafunctional AROM polypeptide (1597 aa).

A 3-dehydroquinate synthase region spans residues 1–384; it reads MGVPTKISIL…HEPRASTVSN (384 aa). NAD(+)-binding positions include 44-46, 81-84, 114-116, and Asp-119; these read DTN, ESSK, and GGV. Arg-130 is a 7-phospho-2-dehydro-3-deoxy-D-arabino-heptonate binding site. Position 139-140 (139-140) interacts with NAD(+); that stretch reads TT. 7-phospho-2-dehydro-3-deoxy-D-arabino-heptonate-binding residues include Asp-146 and Lys-152. Lys-161 lines the NAD(+) pocket. Asn-162 contacts 7-phospho-2-dehydro-3-deoxy-D-arabino-heptonate. NAD(+) contacts are provided by residues 179–182 and Asn-190; that span reads FLNT. Glu-194 lines the Zn(2+) pocket. 7-phospho-2-dehydro-3-deoxy-D-arabino-heptonate is bound by residues 194-197 and Lys-250; that span reads EVIK. Glu-260 (proton acceptor; for 3-dehydroquinate synthase activity) is an active-site residue. 7-phospho-2-dehydro-3-deoxy-D-arabino-heptonate contacts are provided by residues 264 to 268 and His-271; that span reads RNLLN. Zn(2+) is bound at residue His-271. The active-site Proton acceptor; for 3-dehydroquinate synthase activity is His-275. 2 residues coordinate 7-phospho-2-dehydro-3-deoxy-D-arabino-heptonate: His-287 and Lys-356. His-287 contacts Zn(2+). The interval 397 to 842 is EPSP synthase; that stretch reads VSPGVPKNLN…WDSLAQTFKV (446 aa). The active-site For EPSP synthase activity is Cys-824. Residues 866-1057 form a shikimate kinase region; it reads ASIFIIGMRG…RSKENTFFVS (192 aa). An ATP-binding site is contributed by 872 to 879; the sequence is GMRGAGKT. Positions 1058–1278 are 3-dehydroquinase; sequence LTLPDLAPAA…AAPGQLSARE (221 aa). The active-site Proton acceptor; for 3-dehydroquinate dehydratase activity is His-1181. Lys-1209 acts as the Schiff-base intermediate with substrate; for 3-dehydroquinate dehydratase activity in catalysis. Residues 1291 to 1597 are shikimate dehydrogenase; it reads SKKFAVIGNP…VQPKDDDIST (307 aa).

The protein in the N-terminal section; belongs to the sugar phosphate cyclases superfamily. Dehydroquinate synthase family. This sequence in the 2nd section; belongs to the EPSP synthase family. It in the 3rd section; belongs to the shikimate kinase family. In the 4th section; belongs to the type-I 3-dehydroquinase family. The protein in the C-terminal section; belongs to the shikimate dehydrogenase family. Homodimer. Zn(2+) serves as cofactor.

The protein localises to the cytoplasm. The enzyme catalyses 7-phospho-2-dehydro-3-deoxy-D-arabino-heptonate = 3-dehydroquinate + phosphate. It catalyses the reaction 3-dehydroquinate = 3-dehydroshikimate + H2O. The catalysed reaction is shikimate + NADP(+) = 3-dehydroshikimate + NADPH + H(+). It carries out the reaction shikimate + ATP = 3-phosphoshikimate + ADP + H(+). The enzyme catalyses 3-phosphoshikimate + phosphoenolpyruvate = 5-O-(1-carboxyvinyl)-3-phosphoshikimate + phosphate. Its pathway is metabolic intermediate biosynthesis; chorismate biosynthesis; chorismate from D-erythrose 4-phosphate and phosphoenolpyruvate: step 2/7. It participates in metabolic intermediate biosynthesis; chorismate biosynthesis; chorismate from D-erythrose 4-phosphate and phosphoenolpyruvate: step 3/7. It functions in the pathway metabolic intermediate biosynthesis; chorismate biosynthesis; chorismate from D-erythrose 4-phosphate and phosphoenolpyruvate: step 4/7. The protein operates within metabolic intermediate biosynthesis; chorismate biosynthesis; chorismate from D-erythrose 4-phosphate and phosphoenolpyruvate: step 5/7. Its pathway is metabolic intermediate biosynthesis; chorismate biosynthesis; chorismate from D-erythrose 4-phosphate and phosphoenolpyruvate: step 6/7. Its function is as follows. The AROM polypeptide catalyzes 5 consecutive enzymatic reactions in prechorismate polyaromatic amino acid biosynthesis. The chain is Pentafunctional AROM polypeptide from Blastomyces gilchristii (strain SLH14081) (Blastomyces dermatitidis).